The primary structure comprises 495 residues: Myocyte-specific enhancer factor 2A (495 aa).

The region spanning 3 to 57 (RKKIQITRIMDERNRQVTFTKRKFGLMKKAYELSVLCDCEIALIIFNSSNKLFQY) is the MADS-box domain. Residues 58-86 (ASTDMDKVLLKYTEYNEPHESRTNSDIVE) constitute a DNA-binding region (mef2-type). Phosphoserine; by CK2 is present on serine 59. Serine 98 carries the post-translational modification Phosphoserine. Residues 175–225 (AESSMLSPPPATLHRNVSPGAPQRPPSTGSAGGMLSTTDLTVPNGAGNGPV) form a disordered region. Serine 235 bears the Phosphoserine mark. A disordered region spans residues 242 to 271 (TGANSVGKVMPTKSPPPPGGGSVGMNSRKP). The residue at position 249 (lysine 249) is an N6-acetyllysine. A Phosphoserine modification is found at serine 255. The tract at residues 266-283 (MNSRKPDLRVVIPPSSKG) is required for interaction with MAPKs. 2 positions are modified to phosphothreonine; by MAPK7 and MAPK14: threonine 304 and threonine 311. Phosphoserine; by MAPK7 is present on serine 347. Residues 382–394 (SNLSINTNQNINI) show a composition bias toward polar residues. The tract at residues 382–495 (SNLSINTNQN…KRMRMDTWVT (114 aa)) is disordered. An N6-acetyllysine; alternate modification is found at lysine 395. Residue lysine 395 forms a Glycyl lysine isopeptide (Lys-Gly) (interchain with G-Cter in SUMO); alternate linkage. A Phosphoserine; by CDK5 modification is found at serine 400. Threonine 407 bears the Phosphothreonine mark. Positions 421–433 (QQPPPQPPQPQPQ) are enriched in pro residues. Residue serine 441 is modified to Phosphoserine. Residues 441-454 (SPVDSLSSSSSSYD) show a composition bias toward low complexity. Basic and acidic residues-rich tracts occupy residues 455–465 (GSDREDPRGDF) and 476–495 (NAEDRESPSVKRMRMDTWVT).

In terms of assembly, binds DNA as a homo- or heterodimer. Dimerizes with MEF2D. Interacts with HDAC7. Interacts with PIAS1; the interaction enhances sumoylation. Interacts with HDAC4, HDAC9 and SLC2A4RG. Interacts (via the N-terminal) with MAPK7; the interaction results in the phosphorylation and transcriptional activity of MEF2A. Post-translationally, constitutive phosphorylation on Ser-400 promotes Lys-395 sumoylation thus preventing acetylation at this site. Dephosphorylation on Ser-400 by PPP3CA upon neuron depolarization promotes a switch from sumoylation to acetylation on residue Lys-395 leading to inhibition of dendrite claw differentiation. Phosphorylation on Thr-304 and Thr-311 are the main sites involved in p38 MAPK signaling and activate transcription. Phosphorylated on these sites by MAPK14/p38alpha and MAPK11/p38beta, but not by MAPK13/p38delta nor by MAPK12/p38gamma. Phosphorylation on Ser-400 by CDK5 induced by neurotoxicity inhibits MEF2A transcriptional activation leading to apoptosis of cortical neurons. Phosphorylation on Thr-304, Thr-311 and Ser-347 can be induced by EGF. Sumoylation on Lys-395 is enhanced by PIAS1 and represses transcriptional activity. Phosphorylation on Ser-400 is required for sumoylation. Has no effect on nuclear location nor on DNA binding. Sumoylated with SUMO1 and, to a lesser extent with SUMO2 and SUMO3. PIASx facilitates sumoylation in postsynaptic dendrites in the cerebellar cortex and promotes their morphogenesis. In terms of processing, acetylation on Lys-395 activates transcriptional activity. Acetylated by p300 on several sites in diffentiating myocytes. Acetylation on Lys-4 increases DNA binding and transactivation. Hyperacetylation by p300 leads to enhanced cardiac myocyte growth and heart failure. Post-translationally, proteolytically cleaved in cerebellar granule neurons on several sites by caspase 3 and caspase 7 following neurotoxicity. Preferentially cleaves the CDK5-mediated hyperphosphorylated form which leads to neuron apoptosis and transcriptional inactivation.

Its subcellular location is the nucleus. In terms of biological role, transcriptional activator which binds specifically to the MEF2 element, 5'-YTA[AT](4)TAR-3', found in numerous muscle-specific genes. Also involved in the activation of numerous growth factor- and stress-induced genes. Mediates cellular functions not only in skeletal and cardiac muscle development, but also in neuronal differentiation and survival. Plays diverse roles in the control of cell growth, survival and apoptosis via p38 MAPK signaling in muscle-specific and/or growth factor-related transcription. In cerebellar granule neurons, phosphorylated and sumoylated MEF2A represses transcription of NUR77 promoting synaptic differentiation. Associates with chromatin to the ZNF16 promoter. This is Myocyte-specific enhancer factor 2A (Mef2a) from Rattus norvegicus (Rat).